The primary structure comprises 258 residues: Distal membrane-arm assembly complex protein 2 (258 aa).

The protein belongs to the ATP synthase subunit s family. In terms of assembly, interacts with incompletely assembled mitochondrial NADH:ubiquinone oxidoreductase complex (complex I).

The protein resides in the mitochondrion. In terms of biological role, required for the assembly of the mitochondrial NADH:ubiquinone oxidoreductase complex (complex I). Involved in the assembly of the distal region of complex I. In Mus musculus (Mouse), this protein is Distal membrane-arm assembly complex protein 2 (Dmac2).